The sequence spans 107 residues: Small ribosomal subunit protein uS17 (107 aa).

Belongs to the universal ribosomal protein uS17 family. In terms of assembly, part of the 30S ribosomal subunit.

Functionally, one of the primary rRNA binding proteins, it binds specifically to the 5'-end of 16S ribosomal RNA. This Thermotoga sp. (strain RQ2) protein is Small ribosomal subunit protein uS17.